The following is a 692-amino-acid chain: Transforming growth factor beta activator LRRC33 (692 aa).

The first 18 residues, 1-18 (MELLPLWLCLGFHFLTVG), serve as a signal peptide directing secretion. Topologically, residues 19–650 (WRNRSGTATA…CKWERLDLGL (632 aa)) are extracellular. N21 carries an N-linked (GlcNAc...) asparagine glycan. The LRRNT domain occupies 29-56 (ASQGVCKLVGGAADCRGQSLASVPSSLP). LRR repeat units follow at residues 58 to 79 (HARM…SLQP), 82 to 103 (LLES…AFQE), 106 to 127 (HLRS…TAAA), 133 to 155 (GLRR…MLQN), 158 to 179 (SLRS…VFEG), 182 to 203 (RLRE…AFDG), 206 to 227 (ELRH…GLTR), 228 to 239 (LRVLNVSYNVLE), 251 to 272 (ELET…PQYS), and 273 to 294 (KLRT…YNTS). N74 is a glycosylation site (N-linked (GlcNAc...) asparagine). N-linked (GlcNAc...) asparagine glycosylation occurs at N155. A glycan (N-linked (GlcNAc...) asparagine) is linked at N232. N292, N309, and N312 each carry an N-linked (GlcNAc...) asparagine glycan. LRR repeat units lie at residues 329–350 (DLRF…FLRK), 353–374 (SLSH…EHEP), 377–398 (ALTE…PGLA), 403–424 (SLRL…LFAN), 427–447 (NITT…PAAS), 463–484 (SLRS…PFQG), 486–507 (SLTY…APLQ), 512–534 (MLQV…DFSG), 537–558 (NLRD…GGSL), 559–580 (ALET…AVSE), and 585–594 (GLRTIYLSQN). N-linked (GlcNAc...) asparagine glycosylation is found at N408 and N427. N500 carries N-linked (GlcNAc...) asparagine glycosylation. The 49-residue stretch at 595 to 643 (PYDCCGVDGWGALQHGQTVADWAMVTCNLSSKIIRVTELPGGVPRDCKW) folds into the LRRCT domain. A glycan (N-linked (GlcNAc...) asparagine) is linked at N622. The helical transmembrane segment at 651-671 (LYLVLILPSCLTLLVACTVIV) threads the bilayer. Residues 672–692 (LTFKKPLLQVIKSRCHWSSVY) are Cytoplasmic-facing.

The protein belongs to the LRRC32/LRRC33 family. Interacts with TGFB1; associates via disulfide bonds with the Latency-associated peptide chain (LAP) regulatory chain of TGFB1, leading to regulate activation of TGF-beta-1. Interacts (via LRR repeats) with TLR2, TLR3, TLR4, TLR9 and probably other Toll-like receptors. Interacts with CYBB/NOX2; the interaction is direct. Mainly expressed in cells of hematopoietic origin. Highly expressed in bone marrow, thymus, liver, lung, intestine and spleen. In the brain, highly expressed in microglia.

The protein localises to the cell membrane. Its subcellular location is the endoplasmic reticulum membrane. Key regulator of transforming growth factor beta-1 (TGFB1) specifically required for microglia function in the nervous system. Required for activation of latent TGF-beta-1 in macrophages and microglia: associates specifically via disulfide bonds with the Latency-associated peptide (LAP), which is the regulatory chain of TGFB1, and regulates integrin-dependent activation of TGF-beta-1. TGF-beta-1 activation mediated by LRRC33/NRROS is highly localized: there is little spreading of TGF-beta-1 activated from one microglial cell to neighboring microglia, suggesting the existence of localized and selective activation of TGF-beta-1 by LRRC33/NRROS. Indirectly plays a role in Toll-like receptor (TLR) signaling: ability to inhibit TLR-mediated NF-kappa-B activation and cytokine production is probably a consequence of its role in TGF-beta-1 signaling. The chain is Transforming growth factor beta activator LRRC33 from Homo sapiens (Human).